A 718-amino-acid polypeptide reads, in one-letter code: Protein spire homolog 2 (718 aa).

2 disordered regions span residues 1-22 and 143-166; these read MARA…ARPE and DSSC…EGGP. Low complexity predominate over residues 10-21; the sequence is AAPERAGGAARP. Residues 26–207 form the KIND domain; the sequence is LSLEEVLKVY…RALFVETLEL (182 aa). WH2 domains lie at 251-265, 281-299, and 345-362; these read QLMR…LKKV, PFEM…LRKV, and LHEK…LRPV. Position 374 is a phosphoserine (serine 374). Residues 397–434 are disordered; that stretch reads TDTGSGSQRPRPRVLLKAPTLAEMEEMNTSEEEESPCG. A compositionally biased stretch (acidic residues) spans 419–432; that stretch reads EMEEMNTSEEEESP. Phosphoserine is present on residues serine 443, serine 445, and serine 479. The tract at residues 456-518 is disordered; it reads MASGLQSAAQ…SSLSSVDGPE (63 aa). Residues 496–513 are compositionally biased toward low complexity; that stretch reads SGQSQPLPSSALPSSLSS. The tract at residues 538 to 558 is spir-box; that stretch reads LALTVEEVVDVRRVLVKAEME.

This sequence belongs to the spire family. As to expression, detected in oocytes.

It is found in the cytoplasm. The protein localises to the cytoskeleton. Its subcellular location is the cytosol. It localises to the cell membrane. The protein resides in the cytoplasmic vesicle membrane. Acts as an actin nucleation factor, remains associated with the slow-growing pointed end of the new filament. Involved in intracellular vesicle transport along actin fibers, providing a novel link between actin cytoskeleton dynamics and intracellular transport. Required for asymmetric spindle positioning and asymmetric cell division during oocyte meiosis. Required for normal formation of the cleavage furrow and for polar body extrusion during female germ cell meiosis. Also acts in the nucleus: together with SPIRE1 and SPIRE2, promotes assembly of nuclear actin filaments in response to DNA damage in order to facilitate movement of chromatin and repair factors after DNA damage. This chain is Protein spire homolog 2 (Spire2), found in Mus musculus (Mouse).